Reading from the N-terminus, the 557-residue chain is D-arabinono-1,4-lactone oxidase (557 aa).

Residues 25–209 (FLCKPQAIFQ…THVTLRTCPK (185 aa)) enclose the FAD-binding PCMH-type domain. Residues 58–61 (VGSG), 62–63 (HS), 144–148 (ISTGT), Ile-199, and 543–546 (LSGK) contribute to the FAD site. His-62 carries the post-translational modification Pros-8alpha-FAD histidine.

The protein belongs to the oxygen-dependent FAD-linked oxidoreductase family. FAD is required as a cofactor.

It carries out the reaction D-arabinono-1,4-lactone + O2 = dehydro-D-arabinono-1,4-lactone + H2O2 + H(+). It catalyses the reaction L-galactono-1,4-lactone + O2 = L-ascorbate + H2O2 + H(+). The enzyme catalyses L-gulono-1,4-lactone + O2 = L-ascorbate + H2O2 + H(+). The catalysed reaction is L-xylono-1,4-lactone + O2 = dehydro-L-arabinono-1,4-lactone + H2O2 + H(+). It functions in the pathway cofactor biosynthesis; D-erythroascorbate biosynthesis; dehydro-D-arabinono-1,4-lactone from D-arabinose: step 2/2. In terms of biological role, D-arabinono-1,4-lactone oxidase that catalyzes the final step of biosynthesis of D-erythroascorbic acid, an important antioxidant and one of the virulence factors enhancing the pathogenicity. Is also able to oxidize L-galactono-1,4-lactone, L-xylono-1,4-lactone and L-gulono-1,4-lactone. The chain is D-arabinono-1,4-lactone oxidase from Candida albicans (strain SC5314 / ATCC MYA-2876) (Yeast).